The sequence spans 142 residues: uncharacterized protein (142 aa).

Residues methionine 1–asparagine 22 are disordered. Helical transmembrane passes span leucine 63–valine 83 and isoleucine 109–leucine 129.

It is found in the membrane. This is an uncharacterized protein from Acanthamoeba polyphaga mimivirus (APMV).